The sequence spans 398 residues: S-adenosylmethionine synthase (398 aa).

Residue 136-141 coordinates ATP; sequence GTGSSD.

This sequence belongs to the AdoMet synthase 2 family. The cofactor is Mg(2+).

It catalyses the reaction L-methionine + ATP + H2O = S-adenosyl-L-methionine + phosphate + diphosphate. It participates in amino-acid biosynthesis; S-adenosyl-L-methionine biosynthesis; S-adenosyl-L-methionine from L-methionine: step 1/1. Functionally, catalyzes the formation of S-adenosylmethionine from methionine and ATP. The chain is S-adenosylmethionine synthase from Methanosarcina barkeri (strain Fusaro / DSM 804).